Consider the following 223-residue polypeptide: Twisted gastrulation protein homolog 1 (223 aa).

A signal peptide spans 1 to 25 (MKLHYVAVLTLAILMFLTWLPESLS). Asn-52 and Asn-81 each carry an N-linked (GlcNAc...) asparagine glycan.

Belongs to the twisted gastrulation protein family. Interacts with CHRD and BMP4. This interaction enhances CHRD/BMP4 complex formation. Interacts with BMP7.

The protein resides in the secreted. In terms of biological role, may be involved in dorsoventral axis formation. Seems to antagonize BMP signaling by forming ternary complexes with CHRD and BMPs, thereby preventing BMPs from binding to their receptors. In addition to the anti-BMP function, also has pro-BMP activity, partly mediated by cleavage and degradation of CHRD, which releases BMPs from ternary complexes. May be an important modulator of BMP-regulated cartilage development and chondrocyte differentiation. May play a role in thymocyte development. The chain is Twisted gastrulation protein homolog 1 (TWSG1) from Homo sapiens (Human).